The chain runs to 356 residues: DNA polymerase IV (356 aa).

Positions 6–187 constitute a UmuC domain; that stretch reads IIHIDMDAFY…QPIRRLHGVG (182 aa). Mg(2+) is bound by residues Asp10 and Asp105. Glu106 is an active-site residue.

This sequence belongs to the DNA polymerase type-Y family. In terms of assembly, monomer. Requires Mg(2+) as cofactor.

The protein resides in the cytoplasm. The enzyme catalyses DNA(n) + a 2'-deoxyribonucleoside 5'-triphosphate = DNA(n+1) + diphosphate. Functionally, poorly processive, error-prone DNA polymerase involved in untargeted mutagenesis. Copies undamaged DNA at stalled replication forks, which arise in vivo from mismatched or misaligned primer ends. These misaligned primers can be extended by PolIV. Exhibits no 3'-5' exonuclease (proofreading) activity. May be involved in translesional synthesis, in conjunction with the beta clamp from PolIII. This Halorhodospira halophila (strain DSM 244 / SL1) (Ectothiorhodospira halophila (strain DSM 244 / SL1)) protein is DNA polymerase IV.